The sequence spans 293 residues: 4-hydroxy-tetrahydrodipicolinate synthase (293 aa).

Position 45 (threonine 45) interacts with pyruvate. Catalysis depends on tyrosine 133, which acts as the Proton donor/acceptor. The Schiff-base intermediate with substrate role is filled by lysine 161. Isoleucine 203 contacts pyruvate.

It belongs to the DapA family. In terms of assembly, homotetramer; dimer of dimers.

The protein localises to the cytoplasm. The catalysed reaction is L-aspartate 4-semialdehyde + pyruvate = (2S,4S)-4-hydroxy-2,3,4,5-tetrahydrodipicolinate + H2O + H(+). The protein operates within amino-acid biosynthesis; L-lysine biosynthesis via DAP pathway; (S)-tetrahydrodipicolinate from L-aspartate: step 3/4. In terms of biological role, catalyzes the condensation of (S)-aspartate-beta-semialdehyde [(S)-ASA] and pyruvate to 4-hydroxy-tetrahydrodipicolinate (HTPA). The sequence is that of 4-hydroxy-tetrahydrodipicolinate synthase from Shewanella denitrificans (strain OS217 / ATCC BAA-1090 / DSM 15013).